A 556-amino-acid chain; its full sequence is Oxygen-dependent choline dehydrogenase (556 aa).

4–33 is a binding site for FAD; that stretch reads DYIIIGAGSAGNVLATRLTEDPNTSVLLLE. Catalysis depends on histidine 473, which acts as the Proton acceptor.

The protein belongs to the GMC oxidoreductase family. FAD is required as a cofactor.

It carries out the reaction choline + A = betaine aldehyde + AH2. The catalysed reaction is betaine aldehyde + NAD(+) + H2O = glycine betaine + NADH + 2 H(+). It functions in the pathway amine and polyamine biosynthesis; betaine biosynthesis via choline pathway; betaine aldehyde from choline (cytochrome c reductase route): step 1/1. Involved in the biosynthesis of the osmoprotectant glycine betaine. Catalyzes the oxidation of choline to betaine aldehyde and betaine aldehyde to glycine betaine at the same rate. The chain is Oxygen-dependent choline dehydrogenase from Shigella flexneri serotype 5b (strain 8401).